Here is a 330-residue protein sequence, read N- to C-terminus: Pantothenate kinase (330 aa).

108 to 115 (GSVAVGKS) provides a ligand contact to ATP.

This sequence belongs to the prokaryotic pantothenate kinase family.

Its subcellular location is the cytoplasm. It catalyses the reaction (R)-pantothenate + ATP = (R)-4'-phosphopantothenate + ADP + H(+). The protein operates within cofactor biosynthesis; coenzyme A biosynthesis; CoA from (R)-pantothenate: step 1/5. This Allorhizobium ampelinum (strain ATCC BAA-846 / DSM 112012 / S4) (Agrobacterium vitis (strain S4)) protein is Pantothenate kinase.